A 195-amino-acid chain; its full sequence is Imidazoleglycerol-phosphate dehydratase (195 aa).

It belongs to the imidazoleglycerol-phosphate dehydratase family.

Its subcellular location is the cytoplasm. The enzyme catalyses D-erythro-1-(imidazol-4-yl)glycerol 3-phosphate = 3-(imidazol-4-yl)-2-oxopropyl phosphate + H2O. The protein operates within amino-acid biosynthesis; L-histidine biosynthesis; L-histidine from 5-phospho-alpha-D-ribose 1-diphosphate: step 6/9. This is Imidazoleglycerol-phosphate dehydratase from Bordetella petrii (strain ATCC BAA-461 / DSM 12804 / CCUG 43448).